Here is a 2729-residue protein sequence, read N- to C-terminus: Protein NO VEIN (2729 aa).

Residues 1–27 (MQGNHDGSWSLHPSTNNGSGRANGNIN) form a disordered region. 2 short sequence motifs (nuclear localization signal) span residues 194–201 (KRKVDVLR) and 473–480 (MKRLGGSN). Disordered stretches follow at residues 477-517 (GGSN…IPKL) and 2482-2515 (LPSS…DVTE). Composition is skewed to basic and acidic residues over residues 488 to 497 (RNHEKSDSSK) and 2496 to 2515 (NTDD…DVTE).

As to expression, specifically expressed in developing embryos, leaf primordia, and shoot and root apical meristems.

Its subcellular location is the nucleus. In terms of biological role, essential protein required for cell fate determination during embryogenesis. Mediates auxin-dependent coordinated cell-fate specification and patterning in embryos (e.g. cotyledon outgrowth and separation), shoots and roots (e.g. leaf vascular development, cellular patterning and stem cell maintenance in the meristems). Required for provascular PIN1 expression and region-specific expression of PIN7 in leaf primordia, cell type-specific expression of PIN3, PIN4, and PIN7 in the root, and PIN2 polarity in the root cortex. This Arabidopsis thaliana (Mouse-ear cress) protein is Protein NO VEIN.